The primary structure comprises 200 residues: Recombination protein RecR (200 aa).

Residues C57–C72 form a C4-type zinc finger. Residues G81–P176 enclose the Toprim domain.

Belongs to the RecR family.

Its function is as follows. May play a role in DNA repair. It seems to be involved in an RecBC-independent recombinational process of DNA repair. It may act with RecF and RecO. The sequence is that of Recombination protein RecR from Vibrio cholerae serotype O1 (strain ATCC 39541 / Classical Ogawa 395 / O395).